A 139-amino-acid polypeptide reads, in one-letter code: Ribonuclease P/MRP protein subunit POP5 (139 aa).

Belongs to the eukaryotic/archaeal RNase P protein component 2 family.

Its subcellular location is the nucleus. It catalyses the reaction Endonucleolytic cleavage of RNA, removing 5'-extranucleotides from tRNA precursor.. Component of ribonuclease P, a protein complex that generates mature tRNA molecules by cleaving their 5'-ends. Also a component of RNase MRP, which cleaves pre-rRNA sequences. This chain is Ribonuclease P/MRP protein subunit POP5, found in Schizosaccharomyces pombe (strain 972 / ATCC 24843) (Fission yeast).